The following is a 204-amino-acid chain: Large ribosomal subunit protein uL4 (204 aa).

The span at 42-55 (GSRQGSKAQKNRSA) shows a compositional bias: polar residues. The interval 42 to 85 (GSRQGSKAQKNRSAVSGGGKRPWAQKGTGRARAGTTRGPIWRSG) is disordered. Residues 68–79 (GTGRARAGTTRG) are compositionally biased toward low complexity.

Belongs to the universal ribosomal protein uL4 family. In terms of assembly, part of the 50S ribosomal subunit.

Functionally, one of the primary rRNA binding proteins, this protein initially binds near the 5'-end of the 23S rRNA. It is important during the early stages of 50S assembly. It makes multiple contacts with different domains of the 23S rRNA in the assembled 50S subunit and ribosome. Its function is as follows. Forms part of the polypeptide exit tunnel. This is Large ribosomal subunit protein uL4 from Vesicomyosocius okutanii subsp. Calyptogena okutanii (strain HA).